A 305-amino-acid polypeptide reads, in one-letter code: Acetaldehyde dehydrogenase 5 (305 aa).

11–14 (SGNI) lines the NAD(+) pocket. Cys-130 functions as the Acyl-thioester intermediate in the catalytic mechanism. NAD(+)-binding positions include 161–169 (SIGPGTRAN) and Asn-272.

Belongs to the acetaldehyde dehydrogenase family.

The enzyme catalyses acetaldehyde + NAD(+) + CoA = acetyl-CoA + NADH + H(+). This is Acetaldehyde dehydrogenase 5 from Dechloromonas aromatica (strain RCB).